A 310-amino-acid chain; its full sequence is Putative HTH-type transcriptional regulatory protein YN1551_1579 (310 aa).

Residues 125 to 180 (LKHKREEMGYSIGDVAKFLGVSRKAIYDYEKGDSDVSLEVAEKLIDLFGDDIIGDV) form the HTH cro/C1-type domain. Positions 136-155 (IGDVAKFLGVSRKAIYDYEK) form a DNA-binding region, H-T-H motif.

The sequence is that of Putative HTH-type transcriptional regulatory protein YN1551_1579 from Saccharolobus islandicus (strain Y.N.15.51 / Yellowstone #2) (Sulfolobus islandicus).